A 273-amino-acid polypeptide reads, in one-letter code: Zinc finger protein 80 (273 aa).

The C2H2-type 1 zinc-finger motif lies at 49 to 71 (YKCKECGSVFNKNSLLVRHQQIH). The segment at 77–99 (YEYQECGKAFPEKVDFVRHMRIH) adopts a C2H2-type 2; degenerate zinc-finger fold. A C2H2-type 3; atypical zinc finger spans residues 105-127 (CKCVECRKVFNRRSHLLCYRQIH). C2H2-type zinc fingers lie at residues 133–155 (YECSECGKTFSYHSVFIQHRVTH), 161–183 (FGCKECGKTFYYNSSLTRHMKIH), 187–211 (KPCKCSECGKTFTYHSVFFRHSMTH), and 217–239 (YECKECGKGFYYSYSLTRHTRSH).

It belongs to the krueppel C2H2-type zinc-finger protein family.

The protein localises to the nucleus. Functionally, may be involved in transcriptional regulation. The protein is Zinc finger protein 80 (ZNF80) of Pan troglodytes (Chimpanzee).